Here is a 588-residue protein sequence, read N- to C-terminus: Adenine deaminase (588 aa).

This sequence belongs to the metallo-dependent hydrolases superfamily. Adenine deaminase family. As to quaternary structure, homodimer. It depends on Mn(2+) as a cofactor.

The enzyme catalyses adenine + H2O + H(+) = hypoxanthine + NH4(+). The protein is Adenine deaminase of Escherichia coli (strain SE11).